A 76-amino-acid polypeptide reads, in one-letter code: MKIAFIVAISLAFLAVTSCIEFEKSTESHDIQKRGVTITVKPPFPGCVFYECIANCRSRGYKNGGYCTINGCQCLR.

Residues 1–19 form the signal peptide; the sequence is MKIAFIVAISLAFLAVTSC.

This sequence belongs to the invertebrate defensin family.

Functionally, has antifungal activity against the entomopathogenic fungus M.nisopliae, but does not display any antifungal activity against S.cerevisiae nor any antimicrobial activity against M.luteus, B.subtilis, and E.coli. The chain is Gallerimycin (LOC113523440) from Galleria mellonella (Greater wax moth).